A 428-amino-acid polypeptide reads, in one-letter code: Putative oxidoreductase YteT (428 aa).

The first 23 residues, 1 to 23 (MKNIVFCGLSSRAFSMFIKPLME), serve as a signal peptide directing secretion.

Belongs to the Gfo/Idh/MocA family.

Its function is as follows. May play a role in the degradation of type I rhamnogalacturonan derived from plant cell walls. The polypeptide is Putative oxidoreductase YteT (yteT) (Bacillus subtilis (strain 168)).